The primary structure comprises 452 residues: Bifunctional protein GlmU (452 aa).

The tract at residues 1–232 (MTARNSLTIV…EDEVRGINTK (232 aa)) is pyrophosphorylase. UDP-N-acetyl-alpha-D-glucosamine-binding positions include 11–14 (LAAG), Lys25, Gln78, and 83–84 (GT). Asp108 is a binding site for Mg(2+). Gly144, Glu158, Asn173, and Asn230 together coordinate UDP-N-acetyl-alpha-D-glucosamine. Asn230 is a Mg(2+) binding site. A linker region spans residues 233–253 (AQLAEAETVMQTRLRLAAMAA). The N-acetyltransferase stretch occupies residues 254–452 (GVTLIAPETV…KSRHRKPKAH (199 aa)). 2 residues coordinate UDP-N-acetyl-alpha-D-glucosamine: Arg319 and Lys337. His349 serves as the catalytic Proton acceptor. The UDP-N-acetyl-alpha-D-glucosamine site is built by Tyr352 and Asn363. Residues Ala366, 372 to 373 (NY), Ser391, Ser409, and Arg426 each bind acetyl-CoA.

This sequence in the N-terminal section; belongs to the N-acetylglucosamine-1-phosphate uridyltransferase family. The protein in the C-terminal section; belongs to the transferase hexapeptide repeat family. In terms of assembly, homotrimer. Mg(2+) serves as cofactor.

It localises to the cytoplasm. It catalyses the reaction alpha-D-glucosamine 1-phosphate + acetyl-CoA = N-acetyl-alpha-D-glucosamine 1-phosphate + CoA + H(+). The catalysed reaction is N-acetyl-alpha-D-glucosamine 1-phosphate + UTP + H(+) = UDP-N-acetyl-alpha-D-glucosamine + diphosphate. It functions in the pathway nucleotide-sugar biosynthesis; UDP-N-acetyl-alpha-D-glucosamine biosynthesis; N-acetyl-alpha-D-glucosamine 1-phosphate from alpha-D-glucosamine 6-phosphate (route II): step 2/2. The protein operates within nucleotide-sugar biosynthesis; UDP-N-acetyl-alpha-D-glucosamine biosynthesis; UDP-N-acetyl-alpha-D-glucosamine from N-acetyl-alpha-D-glucosamine 1-phosphate: step 1/1. Its pathway is bacterial outer membrane biogenesis; LPS lipid A biosynthesis. In terms of biological role, catalyzes the last two sequential reactions in the de novo biosynthetic pathway for UDP-N-acetylglucosamine (UDP-GlcNAc). The C-terminal domain catalyzes the transfer of acetyl group from acetyl coenzyme A to glucosamine-1-phosphate (GlcN-1-P) to produce N-acetylglucosamine-1-phosphate (GlcNAc-1-P), which is converted into UDP-GlcNAc by the transfer of uridine 5-monophosphate (from uridine 5-triphosphate), a reaction catalyzed by the N-terminal domain. The polypeptide is Bifunctional protein GlmU (Rhodopseudomonas palustris (strain TIE-1)).